Consider the following 122-residue polypeptide: Large ribosomal subunit protein uL14c (122 aa).

This sequence belongs to the universal ribosomal protein uL14 family. As to quaternary structure, part of the 50S ribosomal subunit.

It is found in the plastid. Its function is as follows. Binds to 23S rRNA. The chain is Large ribosomal subunit protein uL14c from Cuscuta obtusiflora (Peruvian dodder).